The chain runs to 291 residues: Protease HtpX homolog (291 aa).

The next 2 membrane-spanning stretches (helical) occupy residues 4-24 (VVLFLLTNLAVMLVLSVSARI) and 38-58 (MGMLLVFAALIGFGGSFISLL). Histidine 144 is a binding site for Zn(2+). The active site involves glutamate 145. Position 148 (histidine 148) interacts with Zn(2+). 2 helical membrane passes run 152-172 (GDMVTLTLIQGVVNTFVIFLS) and 199-219 (ISSIAFEIMFGILASVVVMCF). Position 224 (glutamate 224) interacts with Zn(2+).

Belongs to the peptidase M48B family. Zn(2+) serves as cofactor.

Its subcellular location is the cell inner membrane. This chain is Protease HtpX homolog, found in Chlorobium limicola (strain DSM 245 / NBRC 103803 / 6330).